We begin with the raw amino-acid sequence, 437 residues long: Transcriptional modulator WTM1 (437 aa).

A WD 1 repeat occupies 103 to 144; that stretch reads YQGETVSKMAYLDKTGETTLLSMSKNGSLAWFKEGIKVPIHI. Residue T187 is modified to Phosphothreonine. S200 carries the post-translational modification Phosphoserine. WD repeat units follow at residues 221 to 259, 264 to 304, and 326 to 366; these read PGTT…KPIW, PKNG…AATT, and AGGD…SKYN. The disordered stretch occupies residues 368–404; sequence DDTIAPPQDATEESQTKSLRFLHKGGSRRSPKQIGRR. T370 bears the Phosphothreonine mark. A compositionally biased stretch (basic residues) spans 387-402; it reads RFLHKGGSRRSPKQIG. T406 bears the Phosphothreonine mark.

Interacts with KAP122.

The protein resides in the cytoplasm. It is found in the nucleus. In terms of biological role, transcriptional modulator with roles in meiotic regulation and silencing. Acts either as an adapter to facilitate nuclear import by KAP122 of the RNR2-RNR4 heterodimer, also called beta-beta' subunit, which corresponds to the small subunit of the ribonucleotide reductase (RNR); or as an anchor to retain RNR2-RNR4 in the nucleus. The polypeptide is Transcriptional modulator WTM1 (WTM1) (Saccharomyces cerevisiae (strain ATCC 204508 / S288c) (Baker's yeast)).